The primary structure comprises 243 residues: tRNA (guanine-N(1)-)-methyltransferase (243 aa).

Residues G108 and 127–132 (LGDFVL) each bind S-adenosyl-L-methionine.

The protein belongs to the RNA methyltransferase TrmD family. Homodimer.

It is found in the cytoplasm. The enzyme catalyses guanosine(37) in tRNA + S-adenosyl-L-methionine = N(1)-methylguanosine(37) in tRNA + S-adenosyl-L-homocysteine + H(+). In terms of biological role, specifically methylates guanosine-37 in various tRNAs. The sequence is that of tRNA (guanine-N(1)-)-methyltransferase from Streptococcus pyogenes serotype M5 (strain Manfredo).